We begin with the raw amino-acid sequence, 257 residues long: UPF0246 protein CLL_A2361 (257 aa).

The protein belongs to the UPF0246 family.

The polypeptide is UPF0246 protein CLL_A2361 (Clostridium botulinum (strain Eklund 17B / Type B)).